The chain runs to 325 residues: MIARIWSGESPLWRLLLPLSWLYGLVSGAIRLSYKLGLKRAWRAPVPVVVVGNLTAGGNGKTPVVIWLVEKLQQRGVRVGVVSRGYGGKAAAYPLLLTPETTTAEAGDEPVLIYQRTGAPVAVAPERAAAVKAILAAHNVQIIITDDGLQHYRLARDIEIVVIDGVRRFGNGWWLPAGPMRERASRLKTVDAAIVNGGVARAGEIPMQLAPGLAVNLRTGARCDVAQLSNIVAMAGIGHPPRFFATLEACGAHPQKCVPLADHQTLAPADVQALVGEGQTLVMTEKDAVKCRAFAEDNWWFLPVDARLSGEQPDKLLEHITSLVR.

Position 55 to 62 (55 to 62) interacts with ATP; it reads TAGGNGKT.

Belongs to the LpxK family.

The catalysed reaction is a lipid A disaccharide + ATP = a lipid IVA + ADP + H(+). The protein operates within glycolipid biosynthesis; lipid IV(A) biosynthesis; lipid IV(A) from (3R)-3-hydroxytetradecanoyl-[acyl-carrier-protein] and UDP-N-acetyl-alpha-D-glucosamine: step 6/6. Functionally, transfers the gamma-phosphate of ATP to the 4'-position of a tetraacyldisaccharide 1-phosphate intermediate (termed DS-1-P) to form tetraacyldisaccharide 1,4'-bis-phosphate (lipid IVA). This Salmonella typhi protein is Tetraacyldisaccharide 4'-kinase.